A 224-amino-acid chain; its full sequence is 7-cyano-7-deazaguanine synthase (224 aa).

ATP is bound at residue 9-19; it reads LSGGLDSATVL. The Zn(2+) site is built by Cys189, Cys199, Cys202, and Cys205.

Belongs to the QueC family. Zn(2+) is required as a cofactor.

It catalyses the reaction 7-carboxy-7-deazaguanine + NH4(+) + ATP = 7-cyano-7-deazaguanine + ADP + phosphate + H2O + H(+). It functions in the pathway purine metabolism; 7-cyano-7-deazaguanine biosynthesis. Functionally, catalyzes the ATP-dependent conversion of 7-carboxy-7-deazaguanine (CDG) to 7-cyano-7-deazaguanine (preQ(0)). In Ralstonia pickettii (strain 12J), this protein is 7-cyano-7-deazaguanine synthase.